Reading from the N-terminus, the 517-residue chain is Cytochrome P450 monooxygenase bsc11 (517 aa).

Residues Ala16 to Ser33 traverse the membrane as a helical segment. An N-linked (GlcNAc...) asparagine glycan is attached at Asn204. Cys448 is a binding site for heme.

Belongs to the cytochrome P450 family. Heme serves as cofactor.

It is found in the membrane. It participates in mycotoxin biosynthesis. Functionally, cytochrome P450 monooxygenase; part of the gene cluster that mediates the biosynthesis of the diterpene glucoside brassicicene C. In the first step of the brassicicene C biosynthesis, the bifunctional diterpene synthase bsc8 that possesses both prenyl transferase and terpene cyclase activity, converts isopentenyl diphosphate and dimethylallyl diphosphate into geranylgeranyl diphosphate (GGDP) that is further converted into fusicocca-2,10(14)-diene, the first precursor for brassicicene C. Fusicocca-2,10(14)-diene is then substrate of cytochrome P450 monooxygenase bsc1 for hydroxylation at the C-8 position. Oxidation at C-16 position to aldehyde is then catalyzed by the cytochrome P450 monooyxygenase bsc7, yielding fusicocca-2,10(14)-diene-8-beta,16-diol. Follows the isomerization of the double bond and reduction of aldehyde to alcohol catalyzed by the short-chain dehydrogenase/reductase bsc3 to yield the diol compound fusicocca-1,10(14)-diene-8 beta,16-diol. The next step is the oxidation at the C-3 position of fusicocca-2,10(14)-diene-8-beta,16-diol catalyzed by the alpha-ketoglutarate dependent dioxygenase bsc9, to produce a triol compound. Methylation of the hydroxy group at position 16 is performed by the methyltransferase bsc6. 16-O-methylation is followed by oxidation at the C-13 position to ketone and an alkyl shift of the methyl group leads to brassicicene C. Although the probable acetyltransferase bsc4 is included in the gene cluster, no acetylation reactions are necessary for brassicicene C biosynthesis. However, the fact that brassicicene E, which is a structurally related compound having an acetoxy group at position 12, was previously isolated from another strain of A.brassicicola suggests that the ATCC 96836 strain might also produce a small amount of brassicicene E. In Alternaria brassicicola (Dark leaf spot agent), this protein is Cytochrome P450 monooxygenase bsc11.